Consider the following 1295-residue polypeptide: MMEILRGSPALSAFRINKLLARFQAARLPVHNIYAEYVHFADLNAPLNDDEHAQLERLLKYGPALASHAPQGKLLLVTPRPGTISPWSSKATDIAHNCGLQQVNRLERGVAYYIEAGTLTNEQWQQVTAELHDRMMETVFFALDDAEQLFAHHQPTPVTSVDLLGQGRQALIDANLRLGLALAEDEIDYLQDAFTKLGRNPNDIELYMFAQANSEHCRHKIFNADWIIDGEQQPKSLFKMIKNTFETTPDHVLSAYKDNAAVMEGSEVGRYFADHETGRYDFHQEPAHILMKVETHNHPTAISPWPGAATGSGGEIRDEGATGRGAKPKAGLVGFSVSNLRIPGFEQPWEEDFGKPERIVTALDIMTEGPLGGAAFNNEFGRPALNGYFRTYEEKVNSHNGEELRGYHKPIMLAGGIGNIRADHVQKGEINVGAKLVVLGGPAMNIGLGGGAASSMASGQSDADLDFASVQRDNPEMERRCQEVIDRCWQLGDANPILFIHDVGAGGLSNAMPELVSDGGRGGKFELRDILSDEPGMSPLEIWCNESQERYVLAVAADQLPLFDELCKRERAPYAVIGEATEELHLSLHDRHFDNQPIDLPLDVLLGKTPKMTRDVQTLKAKGDALVREGITIADAVKRVLHLPTVAEKTFLVTIGDRSVTGMVARDQMVGPWQVPVANCAVTTASLDSYYGEAMAIGERAPVALLDFAASARLAVGEALTNIAATQIGDIKRIKLSANWMAAAGHPGEDAGLYEAVKAVGEELCPALGLTIPVGKDSMSMKTRWQEGNEEREMTSPLSLVISAFARVEDVRHTITPQLSTEDNTLLLIDLGKGNNALGATALAQVYRQLGDKPADVRDVAQLKGFYDAIQALVAQRKLLAYHDRSDGGLLVTLAEMAFAGHCGINADIASLGDDRLAALFNEELGAVIQVRAADREAVESVLAQHGLADCVHYVGQAVSGDRFVITANGQTVFSESRTTLRVWWAETTWQMQRLRDNPECADQEHQAKSNDADPGLNVKLSFDINEDVAAPYIATGARPKVAVLREQGVNSHVEMAAAFHRAGFDAIDVHMSDLLTGRTGLEDFHALVACGGFSYGDVLGAGEGWAKSILFNDRVRDEFATFFHRPQTLALGVCNGCQMMSNLRELIPGSELWPRFVRNTSDRFEARFSLVEVTQSPSLLLQGMVGSQMPIAVSHGEGRVEVRDAAHLAALESKGLVALRYVDNFGKVTETYPANPNGSPNGITAVTTESGRVTIMMPHPERVFRTVSNSWHPENWGEDGPWMRIFRNARKQLG.

The segment at 305–327 (WPGAATGSGGEIRDEGATGRGAK) is disordered. Residues 307–318 (GAATGSGGEIRD) and A678 each bind ATP. Mg(2+) is bound by residues E718, N722, and D884. S886 is an ATP binding site. The 254-residue stretch at 1042 to 1295 (VAVLREQGVN…IFRNARKQLG (254 aa)) folds into the Glutamine amidotransferase type-1 domain. C1135 (nucleophile) is an active-site residue. Residues H1260 and E1262 contribute to the active site.

In the N-terminal section; belongs to the FGAMS family. As to quaternary structure, monomer.

It is found in the cytoplasm. It catalyses the reaction N(2)-formyl-N(1)-(5-phospho-beta-D-ribosyl)glycinamide + L-glutamine + ATP + H2O = 2-formamido-N(1)-(5-O-phospho-beta-D-ribosyl)acetamidine + L-glutamate + ADP + phosphate + H(+). It participates in purine metabolism; IMP biosynthesis via de novo pathway; 5-amino-1-(5-phospho-D-ribosyl)imidazole from N(2)-formyl-N(1)-(5-phospho-D-ribosyl)glycinamide: step 1/2. Phosphoribosylformylglycinamidine synthase involved in the purines biosynthetic pathway. Catalyzes the ATP-dependent conversion of formylglycinamide ribonucleotide (FGAR) and glutamine to yield formylglycinamidine ribonucleotide (FGAM) and glutamate. This chain is Phosphoribosylformylglycinamidine synthase, found in Shigella sonnei (strain Ss046).